Here is a 331-residue protein sequence, read N- to C-terminus: Adenosine deaminase (331 aa).

Zn(2+) is bound by residues His12 and His14. His14, Asp16, and Gly170 together coordinate substrate. Zn(2+) is bound at residue His197. Glu200 acts as the Proton donor in catalysis. Asp278 is a binding site for Zn(2+). Asp279 contributes to the substrate binding site.

It belongs to the metallo-dependent hydrolases superfamily. Adenosine and AMP deaminases family. Adenosine deaminase subfamily. The cofactor is Zn(2+).

It catalyses the reaction adenosine + H2O + H(+) = inosine + NH4(+). It carries out the reaction 2'-deoxyadenosine + H2O + H(+) = 2'-deoxyinosine + NH4(+). Functionally, catalyzes the hydrolytic deamination of adenosine and 2-deoxyadenosine. This Shewanella putrefaciens (strain CN-32 / ATCC BAA-453) protein is Adenosine deaminase.